The primary structure comprises 156 residues: Transcription elongation factor GreA (156 aa).

Residues 2-27 adopt a coiled-coil conformation; it reads EKTFPMTKEGLDKLKAELENLKLVKR.

The protein belongs to the GreA/GreB family.

Functionally, necessary for efficient RNA polymerase transcription elongation past template-encoded arresting sites. The arresting sites in DNA have the property of trapping a certain fraction of elongating RNA polymerases that pass through, resulting in locked ternary complexes. Cleavage of the nascent transcript by cleavage factors such as GreA or GreB allows the resumption of elongation from the new 3'terminus. GreA releases sequences of 2 to 3 nucleotides. In Lactococcus lactis subsp. cremoris (strain SK11), this protein is Transcription elongation factor GreA.